The primary structure comprises 384 residues: S-adenosylmethionine synthase (384 aa).

Histidine 15 contacts ATP. Aspartate 17 lines the Mg(2+) pocket. A K(+)-binding site is contributed by glutamate 43. L-methionine contacts are provided by glutamate 56 and glutamine 99. Residues 99–109 form a flexible loop region; it reads QSPDINQGVDR. ATP is bound by residues 164–166, 230–231, aspartate 239, 245–246, alanine 262, and lysine 266; these read DAK, RF, and RK. An L-methionine-binding site is contributed by aspartate 239. Lysine 270 contacts L-methionine.

It belongs to the AdoMet synthase family. In terms of assembly, homotetramer; dimer of dimers. Mg(2+) is required as a cofactor. K(+) serves as cofactor.

The protein localises to the cytoplasm. It catalyses the reaction L-methionine + ATP + H2O = S-adenosyl-L-methionine + phosphate + diphosphate. It functions in the pathway amino-acid biosynthesis; S-adenosyl-L-methionine biosynthesis; S-adenosyl-L-methionine from L-methionine: step 1/1. Catalyzes the formation of S-adenosylmethionine (AdoMet) from methionine and ATP. The overall synthetic reaction is composed of two sequential steps, AdoMet formation and the subsequent tripolyphosphate hydrolysis which occurs prior to release of AdoMet from the enzyme. This Klebsiella pneumoniae subsp. pneumoniae (strain ATCC 700721 / MGH 78578) protein is S-adenosylmethionine synthase.